Here is a 300-residue protein sequence, read N- to C-terminus: Ribosomal protein bS6--L-glutamate ligase (300 aa).

Positions Met-104–Glu-287 constitute an ATP-grasp domain. Residues Lys-141, Glu-178–Tyr-179, Asp-187, and Arg-211–Asn-213 contribute to the ATP site. Mg(2+) is bound by residues Asp-248, Glu-260, and Asn-262. Positions 248, 260, and 262 each coordinate Mn(2+).

Belongs to the RimK family. It depends on Mg(2+) as a cofactor. Mn(2+) is required as a cofactor.

An L-glutamate ligase that catalyzes the ATP-dependent post-translational addition of glutamate residues to the C-terminus of ribosomal protein bS6 (RpsF). Is also able to catalyze the synthesis of poly-alpha-glutamate in vitro, via ATP hydrolysis from unprotected glutamate as substrate. The number of glutamate residues added to either RpsF or to poly-alpha-glutamate changes with pH. The protein is Ribosomal protein bS6--L-glutamate ligase of Escherichia coli O7:K1 (strain IAI39 / ExPEC).